Reading from the N-terminus, the 226-residue chain is Ribonuclease 3 (226 aa).

Residues 7–134 (KQNLKKKYGI…FNGALFLDQG (128 aa)) enclose the RNase III domain. Glu-47 serves as a coordination point for Mg(2+). Residue Asp-51 is part of the active site. Asp-120 and Glu-123 together coordinate Mg(2+). The active site involves Glu-123. A DRBM domain is found at 160 to 226 (DYKTELQERL…AAQAALDKNK (67 aa)). A disordered region spans residues 201–226 (KVSEGQGRNKKAAEQQAAQAALDKNK). The segment covering 214–226 (EQQAAQAALDKNK) has biased composition (low complexity).

The protein belongs to the ribonuclease III family. As to quaternary structure, homodimer. It depends on Mg(2+) as a cofactor.

The protein localises to the cytoplasm. It catalyses the reaction Endonucleolytic cleavage to 5'-phosphomonoester.. Functionally, digests double-stranded RNA. Involved in the processing of primary rRNA transcript to yield the immediate precursors to the large and small rRNAs (23S and 16S). Processes some mRNAs, and tRNAs when they are encoded in the rRNA operon. Processes pre-crRNA and tracrRNA of type II CRISPR loci if present in the organism. The sequence is that of Ribonuclease 3 from Lactobacillus johnsonii (strain CNCM I-12250 / La1 / NCC 533).